Here is a 222-residue protein sequence, read N- to C-terminus: PKHD-type hydroxylase Syncc9902_2001 (222 aa).

The 95-residue stretch at 80–174 (RVHSILISRS…RLVCVGWIES (95 aa)) folds into the Fe2OG dioxygenase domain. Residues histidine 98, aspartate 100, and histidine 155 each coordinate Fe cation. Residue arginine 165 participates in 2-oxoglutarate binding.

It depends on Fe(2+) as a cofactor. L-ascorbate is required as a cofactor.

The chain is PKHD-type hydroxylase Syncc9902_2001 from Synechococcus sp. (strain CC9902).